The primary structure comprises 79 residues: Sec-independent protein translocase protein TatA (79 aa).

A helical membrane pass occupies residues 1–21; the sequence is MFSGISIWQLLILLAIVVLLF. 2 stretches are compositionally biased toward basic and acidic residues: residues 44 to 58 and 66 to 79; these read MKDG…RLAD and QDAE…KDKA. Residues 44–79 form a disordered region; sequence MKDGEDEQDHKRLADDDQPQNKQDAEQKAEQEKDKA.

The protein belongs to the TatA/E family. As to quaternary structure, the Tat system comprises two distinct complexes: a TatABC complex, containing multiple copies of TatA, TatB and TatC subunits, and a separate TatA complex, containing only TatA subunits. Substrates initially bind to the TatABC complex, which probably triggers association of the separate TatA complex to form the active translocon.

The protein resides in the cell inner membrane. In terms of biological role, part of the twin-arginine translocation (Tat) system that transports large folded proteins containing a characteristic twin-arginine motif in their signal peptide across membranes. TatA could form the protein-conducting channel of the Tat system. This Alcanivorax borkumensis (strain ATCC 700651 / DSM 11573 / NCIMB 13689 / SK2) protein is Sec-independent protein translocase protein TatA.